A 350-amino-acid polypeptide reads, in one-letter code: Variable large protein 4 (350 aa).

Positions 1–18 are cleaved as a signal peptide; it reads MRRRISAIIMTLFMVLVS. A lipid anchor (N-palmitoyl cysteine) is attached at C19. Residue C19 is the site of S-diacylglycerol cysteine attachment.

It belongs to the variable large protein (Vlp) family. Delta subfamily.

The protein resides in the cell outer membrane. In terms of biological role, the Vlp and Vsp proteins are antigenically distinct proteins, only one vlp or vsp gene is transcriptionally active at any one time. Switching between these genes is a mechanism of host immune response evasion. This is Variable large protein 4 from Borrelia hermsii.